The sequence spans 929 residues: Bifunctional glutamine synthetase adenylyltransferase/adenylyl-removing enzyme (929 aa).

Positions 1 to 422 (MTTPISTSRA…TRHFEQIFAV (422 aa)) are adenylyl removase. Residues 429–929 (LGTFARIRPE…FQLWEDVFGT (501 aa)) are adenylyl transferase.

This sequence belongs to the GlnE family. Mg(2+) serves as cofactor.

The catalysed reaction is [glutamine synthetase]-O(4)-(5'-adenylyl)-L-tyrosine + phosphate = [glutamine synthetase]-L-tyrosine + ADP. It catalyses the reaction [glutamine synthetase]-L-tyrosine + ATP = [glutamine synthetase]-O(4)-(5'-adenylyl)-L-tyrosine + diphosphate. Functionally, involved in the regulation of glutamine synthetase GlnA, a key enzyme in the process to assimilate ammonia. When cellular nitrogen levels are high, the C-terminal adenylyl transferase (AT) inactivates GlnA by covalent transfer of an adenylyl group from ATP to specific tyrosine residue of GlnA, thus reducing its activity. Conversely, when nitrogen levels are low, the N-terminal adenylyl removase (AR) activates GlnA by removing the adenylyl group by phosphorolysis, increasing its activity. The regulatory region of GlnE binds the signal transduction protein PII (GlnB) which indicates the nitrogen status of the cell. The sequence is that of Bifunctional glutamine synthetase adenylyltransferase/adenylyl-removing enzyme from Nitrosomonas eutropha (strain DSM 101675 / C91 / Nm57).